Here is a 479-residue protein sequence, read N- to C-terminus: Probable acyl-CoA desaturase (479 aa).

The span at 1-18 (MTAPSATAFSSATTQPTT) shows a compositional bias: low complexity. The disordered stretch occupies residues 1–28 (MTAPSATAFSSATTQPTTEGNASMRKRT). Residues 1 to 61 (MTAPSATAFS…PWTMQNWWRH (61 aa)) lie on the Cytoplasmic side of the membrane. The chain crosses the membrane as a helical span at residues 62–82 (LNWLHCMLIFGLPMIAIYGVF). At 83-89 (TTPLQTK) the chain is on the lumenal side. Residues 90–110 (TLIFAIIYYAYSGLGITAGYH) form a helical membrane-spanning segment. Fe cation is bound by residues His110, His115, His147, His150, and His151. A Histidine box-1 motif is present at residues 110–115 (HRLWSH). Residues 111-204 (RLWSHRAYKA…DPFVMFNHRH (94 aa)) are Cytoplasmic-facing. Positions 147-151 (HRAHH) match the Histidine box-2 motif. Residues 205–225 (FLPIASFMAFIFPSLFCGLLW) traverse the membrane as a helical segment. The Lumenal segment spans residues 226–229 (GDYR). Residues 230 to 250 (GGYFYAGVCRLVFVHHATFCV) traverse the membrane as a helical segment. The Cytoplasmic segment spans residues 251–479 (NSLAHLIGSQ…QPPIEAAAAN (229 aa)). Residues His255, His284, His287, and His288 each contribute to the Fe cation site. The Histidine box-3 motif lies at 284-288 (HNYHH). Residues 357-433 (QLPVMEFEDF…LSTYRVAVVR (77 aa)) form the Cytochrome b5 heme-binding domain. Residues His390 and His416 each coordinate heme.

It belongs to the fatty acid desaturase type 1 family. It depends on Fe(2+) as a cofactor.

The protein resides in the membrane. It catalyses the reaction octadecanoyl-CoA + 2 Fe(II)-[cytochrome b5] + O2 + 2 H(+) = (9Z)-octadecenoyl-CoA + 2 Fe(III)-[cytochrome b5] + 2 H2O. Stearoyl-CoA desaturase that utilizes O(2) and electrons from reduced cytochrome b5 to introduce the first double bond into saturated fatty acyl-CoA substrates. Catalyzes the insertion of a cis double bond at the delta-9 position into fatty acyl-CoA substrates including palmitoyl-CoA and stearoyl-CoA. Contributes to the biosynthesis of membrane phospholipids, cholesterol esters and triglycerides. The polypeptide is Probable acyl-CoA desaturase (Schizosaccharomyces pombe (strain 972 / ATCC 24843) (Fission yeast)).